The following is a 448-amino-acid chain: Probable glycine dehydrogenase (decarboxylating) subunit 1 (448 aa).

The protein belongs to the GcvP family. N-terminal subunit subfamily. As to quaternary structure, the glycine cleavage system is composed of four proteins: P, T, L and H. In this organism, the P 'protein' is a heterodimer of two subunits.

It carries out the reaction N(6)-[(R)-lipoyl]-L-lysyl-[glycine-cleavage complex H protein] + glycine + H(+) = N(6)-[(R)-S(8)-aminomethyldihydrolipoyl]-L-lysyl-[glycine-cleavage complex H protein] + CO2. In terms of biological role, the glycine cleavage system catalyzes the degradation of glycine. The P protein binds the alpha-amino group of glycine through its pyridoxal phosphate cofactor; CO(2) is released and the remaining methylamine moiety is then transferred to the lipoamide cofactor of the H protein. The protein is Probable glycine dehydrogenase (decarboxylating) subunit 1 of Lysinibacillus sphaericus (strain C3-41).